Consider the following 83-residue polypeptide: Putative beta-neurotoxin RjAa15f (83 aa).

Residues 1 to 18 form the signal peptide; the sequence is MKILIFIIASFMLIGVEC. The region spanning 19–82 is the LCN-type CS-alpha/beta domain; the sequence is KEGYPMGRNG…VWDSSNNKCV (64 aa). Disulfide bonds link Cys29/Cys81, Cys33/Cys55, Cys40/Cys62, and Cys44/Cys64.

It belongs to the long (4 C-C) scorpion toxin superfamily. Sodium channel inhibitor family. Beta subfamily. In terms of tissue distribution, expressed by the venom gland.

The protein localises to the secreted. In terms of biological role, beta toxins bind voltage-independently at site-4 of sodium channels (Nav) and shift the voltage of activation toward more negative potentials thereby affecting sodium channel activation and promoting spontaneous and repetitive firing. The chain is Putative beta-neurotoxin RjAa15f from Rhopalurus junceus (Caribbean blue scorpion).